Reading from the N-terminus, the 506-residue chain is Galactose/methyl galactoside import ATP-binding protein MglA (506 aa).

ABC transporter domains lie at L14–S249 and V264–L506. ATP is bound at residue G46–S53.

The protein belongs to the ABC transporter superfamily. Galactose/methyl galactoside importer (TC 3.A.1.2.3) family. The complex is composed of one ATP-binding protein (MglA), two transmembrane proteins (MglC) and a solute-binding protein (MglB).

The protein localises to the cell inner membrane. The catalysed reaction is D-galactose(out) + ATP + H2O = D-galactose(in) + ADP + phosphate + H(+). It catalyses the reaction methyl beta-D-galactoside(out) + ATP + H2O = methyl beta-D-galactoside(in) + ADP + phosphate + H(+). Functionally, part of the ABC transporter complex MglABC involved in galactose/methyl galactoside import. Responsible for energy coupling to the transport system. The polypeptide is Galactose/methyl galactoside import ATP-binding protein MglA (Shigella boydii serotype 4 (strain Sb227)).